A 1191-amino-acid chain; its full sequence is MEAFEISDFKEHAKKKSMWAGALNKVTISGLMGVFTEDEDLMALPIHRDHCPALLKIFDELIVNATDHERACHSKTKKVTYIKISFDKGVFACENDGPGIPIAKHEQASLIAKRDVYVPEVASCHFLAGTNINKAKDCIKGGTNGVGLKLAMVHSQWAILTTADGAQKYVQHINQRLDIIEPPTITPSREMFTRIELMPVYQELGYAQPLSETEQADLSAWIYLRACQCAAYVGKGTTIYYNDKPCNTGSVMALAKMYTLLSAPNSTIHTTAIKADAKPYSLHPLQVAAVVSPKFKKFEHVSIINGVNCVKGEHVTFLKKTINEMVVKKFQQTIKDKNRKTTLRDSCSNIFVVIVGSIPGIEWTGQRKDELSIAENVFKTHYSIPSSFLTNMTRSIVDILLQSISKKDNHKQVDVDKYTRANAGGKKAQDCMLLAAEGDSALSLVRAGLTLGKSNPSGPSFDFCGMISLGGVIMNACKKVTNITTDSGETIMVRNEQLTNNKVLQGIVQVLGLDFNCHYKTQEERAKLRYGCIVACVDQDLDGCGKILGLLLAYFHLFWPQLIIHGFVKRLLTPLIRVYEKGKTVPVEFYYEQEFDAWAKKQTSLANHTVKYYKGLAAHDTHEVKSMFKHFDNMVYTFTLDDSAKELFHIYFGGESELRKRELCTGVVPLTETQTQSIHSDRQIPCSLHLQVDTKAYKLDAIERQIPNFLDGMTRARRKILAGGLKCFASNNRERKVFQFGGYVADHMFYHHGDMSLNTSIIKAAQYYPGSSHLYPVFIGIGSFGSRHLGGKDAGSPRYISVQLASEFIKTMFPAEDSWLLPYVFEDGQRAEPEYYVPVLPLAIMEYGANPSEGWKYTTWARQLEDILALVRAYVDKNNPKHELLHYAIERKITVLPLRPSNYNFKGHLKRFGQYYYSYGTYVVSEQRNIITITELPLRVPTVAYIESIKKSSNRMAFIEEIIDYSSSETIEILVKLKPNSLNRIVEEFKETEEQDSIENFLRLRNCLHSHLNFVKPKGGIIEFNSYYEILYAWLPYRRDVYQKRLMRERAVLKLRIIMETAIVRYINESADLNLSHYEDEKEASRILSEHGFPPLNQSLITSPEFASIEELNQKALQGCYTYILSLQARELLIAAKTRRVEKIKKMQARLDKVEQLLQESPFPGASVWLEEIDAVEKAIIKGRSTQWKFH.

ATP-binding positions include N64, N95, and 142 to 149 (GTNGVGLK). 3 residues coordinate Mg(2+): E437, D538, and D540. In terms of domain architecture, Topo IIA-type catalytic spans 706 to 1173 (IPNFLDGMTR…PGASVWLEEI (468 aa)). The active-site O-(5'-phospho-DNA)-tyrosine intermediate is Y799.

This sequence belongs to the type II topoisomerase family. It depends on Mg(2+) as a cofactor. The cofactor is Mn(2+). Ca(2+) serves as cofactor.

Its subcellular location is the host cytoplasm. The catalysed reaction is ATP-dependent breakage, passage and rejoining of double-stranded DNA.. In terms of biological role, type II topoisomerase. Processively relaxes supercoiled DNA. Displays DNA-supercoiling activity only when associated with the viral histone-like protein. This Ornithodoros (relapsing fever ticks) protein is DNA topoisomerase 2.